Here is a 359-residue protein sequence, read N- to C-terminus: Ribosome biogenesis protein BRX1 homolog (359 aa).

Residues 1–12 show a composition bias toward basic residues; it reads MGRKFQNKKKKA. Positions 1–42 are disordered; that stretch reads MGRKFQNKKKKAAPQLEIVPLDENPPLPPQRSSDDVVPKKAR. One can recognise a Brix domain in the interval 50–241; that stretch reads QRVLVFSARG…PVKIFDGSFT (192 aa).

Belongs to the BRX1 family.

It is found in the nucleus. Its subcellular location is the nucleolus. Required for biogenesis of the 60S ribosomal subunit. This is Ribosome biogenesis protein BRX1 homolog from Drosophila melanogaster (Fruit fly).